The following is a 180-amino-acid chain: Bifunctional protein PyrR (180 aa).

Positions 99–111 (VILVDDVLYTCRT) match the PRPP-binding motif.

The protein belongs to the purine/pyrimidine phosphoribosyltransferase family. PyrR subfamily. In terms of assembly, homodimer and homohexamer; in equilibrium.

The catalysed reaction is UMP + diphosphate = 5-phospho-alpha-D-ribose 1-diphosphate + uracil. Regulates transcriptional attenuation of the pyrimidine nucleotide (pyr) operon by binding in a uridine-dependent manner to specific sites on pyr mRNA. This disrupts an antiterminator hairpin in the RNA and favors formation of a downstream transcription terminator, leading to a reduced expression of downstream genes. Functionally, also displays a weak uracil phosphoribosyltransferase activity which is not physiologically significant. The sequence is that of Bifunctional protein PyrR from Clostridium botulinum (strain Alaska E43 / Type E3).